Reading from the N-terminus, the 200-residue chain is MWLSGRGLRCVRGGREVFDGLGFEAAGGEALALVGHNGAGKTSLLRLIAGLLAPAAGTITFDGGEPDTPVAEQAHYLGHRDALKPSLSVTENLAFWREFLGGEPTDLPAAIEAVGLAHAAELPAAYLSAGQRRRLSIARLLVVRRPIWLLDEPTSALDVRGQEAFGRLMSDHLAGGGLIIAATHSPLGIAAREMRIGAAA.

The ABC transporter domain occupies 3–200 (LSGRGLRCVR…AREMRIGAAA (198 aa)). 35 to 42 (GHNGAGKT) lines the ATP pocket.

It belongs to the ABC transporter superfamily. CcmA exporter (TC 3.A.1.107) family. In terms of assembly, the complex is composed of two ATP-binding proteins (CcmA) and two transmembrane proteins (CcmB).

It is found in the cell inner membrane. It carries out the reaction heme b(in) + ATP + H2O = heme b(out) + ADP + phosphate + H(+). Functionally, part of the ABC transporter complex CcmAB involved in the biogenesis of c-type cytochromes; once thought to export heme, this seems not to be the case, but its exact role is uncertain. Responsible for energy coupling to the transport system. The sequence is that of Cytochrome c biogenesis ATP-binding export protein CcmA from Rhodopseudomonas palustris (strain BisB5).